Reading from the N-terminus, the 285-residue chain is tRNA-cytidine(32) 2-sulfurtransferase (285 aa).

A PP-loop motif motif is present at residues 49-54; that stretch reads SGGKDS. [4Fe-4S] cluster contacts are provided by Cys124, Cys127, and Cys215.

It belongs to the TtcA family. In terms of assembly, homodimer. The cofactor is Mg(2+). [4Fe-4S] cluster is required as a cofactor.

Its subcellular location is the cytoplasm. It carries out the reaction cytidine(32) in tRNA + S-sulfanyl-L-cysteinyl-[cysteine desulfurase] + AH2 + ATP = 2-thiocytidine(32) in tRNA + L-cysteinyl-[cysteine desulfurase] + A + AMP + diphosphate + H(+). Its pathway is tRNA modification. Functionally, catalyzes the ATP-dependent 2-thiolation of cytidine in position 32 of tRNA, to form 2-thiocytidine (s(2)C32). The sulfur atoms are provided by the cysteine/cysteine desulfurase (IscS) system. The sequence is that of tRNA-cytidine(32) 2-sulfurtransferase from Hahella chejuensis (strain KCTC 2396).